The sequence spans 446 residues: Homocitrate synthase, mitochondrial (446 aa).

Low complexity predominate over residues M1–P14. A disordered region spans residues M1 to A36. Residues F48–V307 form the Pyruvate carboxyltransferase domain. A 2-oxoglutarate-binding site is contributed by R56. A Mg(2+)-binding site is contributed by E57. Positions 116, 176, and 210 each coordinate 2-oxoglutarate. The Mg(2+) site is built by H237 and H239. Catalysis depends on H334, which acts as the Proton acceptor. The disordered stretch occupies residues T422–E446. Over residues P437 to E446 the composition is skewed to basic and acidic residues.

The protein belongs to the alpha-IPM synthase/homocitrate synthase family. Homocitrate synthase LYS20/LYS21 subfamily. The cofactor is Mg(2+). Mn(2+) is required as a cofactor.

Its subcellular location is the mitochondrion. The enzyme catalyses acetyl-CoA + 2-oxoglutarate + H2O = (2R)-homocitrate + CoA + H(+). Its pathway is amino-acid biosynthesis; L-lysine biosynthesis via AAA pathway; L-alpha-aminoadipate from 2-oxoglutarate: step 1/5. Its function is as follows. Catalyzes the aldol-type condensation of 2-oxoglutarate with acetyl-CoA to yield homocitrate. Carries out the first step of the alpha-aminoadipate (AAA) lysine biosynthesis pathway. This Yarrowia lipolytica (strain CLIB 122 / E 150) (Yeast) protein is Homocitrate synthase, mitochondrial (LYS1).